The sequence spans 326 residues: ELMO domain-containing protein 1 (326 aa).

Residues 133–306 enclose the ELMO domain; sequence QHEEMLLKLW…KFRKRIIKQL (174 aa).

Its function is as follows. Acts as a GTPase-activating protein (GAP) toward guanine nucleotide exchange factors like ARL2, ARL3, ARF1 and ARF6, but not for GTPases outside the Arf family. In Pongo abelii (Sumatran orangutan), this protein is ELMO domain-containing protein 1 (ELMOD1).